The sequence spans 596 residues: Nitrite reductase (596 aa).

The N-terminal stretch at 1–29 (MRQRTPFARPGLLASAALALVLGPLAASA) is a signal peptide. The interval 30–76 (QEQVAPPKDPAAALEDHKTRTDNRYEPSLDNLAQQDVAAPGAPEGVS) is N-terminal tail. Histidine 46 contacts heme c. The heme d1 site is built by tyrosine 54 and serine 57. One can recognise a Cytochrome c domain in the interval 77–162 (ALSDAQYNEA…ANYLLLDPAA (86 aa)). Residues cysteine 94, cysteine 97, histidine 98, lysine 108, and tyrosine 122 each contribute to the heme c site. Heme d1 contacts are provided by tryptophan 138, arginine 203, histidine 229, arginine 232, arginine 245, arginine 272, tyrosine 292, arginine 420, glutamine 536, and threonine 583. The D1-heme domain stretch occupies residues 163 to 596 (PPEFGMKEMR…NVYNTMTDTY (434 aa)).

As to quaternary structure, homodimer. Heme c is required as a cofactor. Heme serves as cofactor.

It localises to the periplasm. It catalyses the reaction nitric oxide + Fe(III)-[cytochrome c] + H2O = Fe(II)-[cytochrome c] + nitrite + 2 H(+). It carries out the reaction A + NH4(+) + H2O = hydroxylamine + AH2 + H(+). The polypeptide is Nitrite reductase (nirS) (Paracoccus pantotrophus (Thiosphaera pantotropha)).